The primary structure comprises 88 residues: Small ribosomal subunit protein bS20 (88 aa).

Belongs to the bacterial ribosomal protein bS20 family.

Binds directly to 16S ribosomal RNA. The chain is Small ribosomal subunit protein bS20 from Oenococcus oeni (strain ATCC BAA-331 / PSU-1).